A 133-amino-acid polypeptide reads, in one-letter code: Profilin-1 (133 aa).

Cys95 and Cys117 are joined by a disulfide.

It belongs to the profilin family. Dimer and tetramer. Occurs in many kinds of cells as a complex with monomeric actin in a 1:1 ratio.

The protein resides in the cytoplasm. It localises to the cytoskeleton. In terms of biological role, binds to actin and affects the structure of the cytoskeleton. At high concentrations, profilin prevents the polymerization of actin, whereas it enhances it at low concentrations. By binding to PIP2, it inhibits the formation of IP3 and DG. Possesses high binding affinity for poly(L-proline). In Artemisia vulgaris (Mugwort), this protein is Profilin-1.